The primary structure comprises 270 residues: Ribosomal RNA small subunit methyltransferase A (270 aa).

Residues asparagine 16, leucine 18, glycine 43, glutamate 64, aspartate 89, and asparagine 110 each contribute to the S-adenosyl-L-methionine site.

Belongs to the class I-like SAM-binding methyltransferase superfamily. rRNA adenine N(6)-methyltransferase family. RsmA subfamily.

The protein localises to the cytoplasm. It carries out the reaction adenosine(1518)/adenosine(1519) in 16S rRNA + 4 S-adenosyl-L-methionine = N(6)-dimethyladenosine(1518)/N(6)-dimethyladenosine(1519) in 16S rRNA + 4 S-adenosyl-L-homocysteine + 4 H(+). Functionally, specifically dimethylates two adjacent adenosines (A1518 and A1519) in the loop of a conserved hairpin near the 3'-end of 16S rRNA in the 30S particle. May play a critical role in biogenesis of 30S subunits. This is Ribosomal RNA small subunit methyltransferase A from Pseudomonas fluorescens (strain ATCC BAA-477 / NRRL B-23932 / Pf-5).